Reading from the N-terminus, the 140-residue chain is uncharacterized protein (140 aa).

Residues 121–140 are disordered; it reads EEVKNGELIDPNVTTEDEKL.

This is an uncharacterized protein from Schizosaccharomyces pombe (strain 972 / ATCC 24843) (Fission yeast).